Here is a 322-residue protein sequence, read N- to C-terminus: Undecaprenyl-phosphate 4-deoxy-4-formamido-L-arabinose transferase (322 aa).

Residues 1-235 (MFEIHPVKKV…TCLTTTPLRM (235 aa)) lie on the Cytoplasmic side of the membrane. Residues 236 to 256 (LSLLGSIIAIGGFSIAVLLVI) form a helical membrane-spanning segment. Residues 257 to 269 (LRLTFGPQWAAEG) lie on the Periplasmic side of the membrane. Residues 270–290 (VFMLFAVLFTFIGAQFIGMGL) form a helical membrane-spanning segment. Residues 291 to 322 (LGEYIGRIYTDVRARPRYFVQQVIRPSSKENE) lie on the Cytoplasmic side of the membrane.

This sequence belongs to the glycosyltransferase 2 family.

The protein resides in the cell inner membrane. It catalyses the reaction UDP-4-deoxy-4-formamido-beta-L-arabinose + di-trans,octa-cis-undecaprenyl phosphate = 4-deoxy-4-formamido-alpha-L-arabinopyranosyl di-trans,octa-cis-undecaprenyl phosphate + UDP. It functions in the pathway glycolipid biosynthesis; 4-amino-4-deoxy-alpha-L-arabinose undecaprenyl phosphate biosynthesis; 4-amino-4-deoxy-alpha-L-arabinose undecaprenyl phosphate from UDP-4-deoxy-4-formamido-beta-L-arabinose and undecaprenyl phosphate: step 1/2. The protein operates within bacterial outer membrane biogenesis; lipopolysaccharide biosynthesis. Functionally, catalyzes the transfer of 4-deoxy-4-formamido-L-arabinose from UDP to undecaprenyl phosphate. The modified arabinose is attached to lipid A and is required for resistance to polymyxin and cationic antimicrobial peptides. The chain is Undecaprenyl-phosphate 4-deoxy-4-formamido-L-arabinose transferase from Escherichia coli (strain SMS-3-5 / SECEC).